A 141-amino-acid chain; its full sequence is Hemoglobin subunit alpha-D (141 aa).

The 141-residue stretch at 1-141 (VLTAEDKKLI…VAAVLAEKYR (141 aa)) folds into the Globin domain. The heme b site is built by histidine 58 and histidine 87.

This sequence belongs to the globin family. In terms of assembly, heterotetramer of two alpha-D chains and two beta chains. In terms of tissue distribution, red blood cells.

In terms of biological role, involved in oxygen transport from the lung to the various peripheral tissues. The sequence is that of Hemoglobin subunit alpha-D (HBAD) from Sturnus vulgaris (Starling).